Consider the following 1669-residue polypeptide: Collagen alpha-1(IV) chain (1669 aa).

Residues 1–27 (MGPRLSVWLLLLFAALLLHEERSRAAA) form the signal peptide. Positions 28 to 172 (KGDCGGSGCG…LGHVPGTLLK (145 aa)) are cleaved as a propeptide — N-terminal propeptide (7S domain). Residues 47–1443 (QKGERGLPGL…MGPPGTPSVD (1397 aa)) form a disordered region. Positions 92–104 (TRGPPGAAGYPGN) are enriched in low complexity. Residue asparagine 126 is glycosylated (N-linked (GlcNAc...) asparagine). The tract at residues 173–1440 (GERGFPGIPG…PGSMGPPGTP (1268 aa)) is triple-helical region. Residues 196–214 (VGPPGFTGPPGPPGPPGPP) show a composition bias toward pro residues. 3 positions are modified to 3-hydroxyproline: proline 204, proline 207, and proline 210. The span at 234-247 (QGVSGPPGVPGQAQ) shows a compositional bias: low complexity. Over residues 289–298 (PGKDGEKGER) the composition is skewed to basic and acidic residues. A compositionally biased stretch (pro residues) spans 367-376 (PGQPGPPGFP). Residues 377–387 (TPGQAGAPGFP) show a composition bias toward low complexity. Composition is skewed to pro residues over residues 413–424 (PGPPGPPGPPGQ) and 436–448 (PGPPGDQGPPGTP). The span at 485 to 494 (PGEIGFPGQP) shows a compositional bias: low complexity. Composition is skewed to basic and acidic residues over residues 497–508 (KGDRGLPGRDGL) and 535–545 (FDMRLKGDKGD). Positions 586 to 595 (GPPGGVGFPG) are enriched in gly residues. A 3-hydroxyproline mark is found at proline 587 and proline 602. Proline 603 bears the 4-hydroxyproline mark. Position 605 is a 3-hydroxyproline (proline 605). Position 606 is a 4-hydroxyproline (proline 606). A compositionally biased stretch (low complexity) spans 611 to 620 (IGPVGEKGQA). Residues 621–630 (GFPGGPGSPG) show a composition bias toward gly residues. 4-hydroxyproline is present on residues proline 623, proline 626, proline 629, and proline 632. At proline 647 the chain carries 3-hydroxyproline. The segment covering 715 to 731 (RPGFNGLPGNPGPQGQK) has biased composition (low complexity). Over residues 758-767 (GSIGGPGVPG) the composition is skewed to gly residues. Residues 784–802 (PGPPGVQGPAGPPGVPGIG) show a composition bias toward pro residues. The segment covering 803–817 (PPGAMGPPGGQGPPG) has biased composition (gly residues). Low complexity-rich tracts occupy residues 847-875 (SQGLPGLTGQSGLPGLPGQQGTPGVPGFP) and 994-1003 (DPGLSGTPGS). Residues 1011–1020 (GSVGGMGLPG) are compositionally biased toward gly residues. Proline 1214 carries the 3-hydroxyproline modification. The segment covering 1220–1230 (QPGLPGTPGHP) has biased composition (low complexity). A compositionally biased stretch (pro residues) spans 1247-1258 (PGHPGPMGPPGF). The span at 1290-1299 (GMPGIGGSPG) shows a compositional bias: gly residues. Composition is skewed to low complexity over residues 1333 to 1343 (DQGVPGPKGLQ), 1368 to 1391 (PGLKGLQGPPGPKGQQGVTGSVGL), and 1398 to 1412 (PGFDGAPGQKGETGP). Positions 1413–1428 (FGPPGPRGFPGPPGPD) are enriched in pro residues. The residue at position 1424 (proline 1424) is a 3-hydroxyproline. A Collagen IV NC1 domain is found at 1445-1669 (GFLVTRHSQT…SRCQVCMRRT (225 aa)). Intrachain disulfides connect cysteine 1460/cysteine 1551, cysteine 1493/cysteine 1548, cysteine 1505/cysteine 1511, cysteine 1570/cysteine 1665, cysteine 1604/cysteine 1662, and cysteine 1616/cysteine 1622. Methionine 1533 is covalently cross-linked (S-Lysyl-methionine sulfilimine (Met-Lys) (interchain with K-1651)). Lysine 1651 is covalently cross-linked (S-Lysyl-methionine sulfilimine (Lys-Met) (interchain with M-1533)).

This sequence belongs to the type IV collagen family. As to quaternary structure, there are six type IV collagen isoforms, alpha 1(IV)-alpha 6(IV), each of which can form a triple helix structure with 2 other chains to generate type IV collagen network. Interacts with EFEMP2. Lysines at the third position of the tripeptide repeating unit (G-X-Y) are hydroxylated. The modified lysines can be O-glycosylated. Post-translationally, contains 4-hydroxyproline. Prolines at the third position of the tripeptide repeating unit (G-X-Y) are hydroxylated in some or all of the chains. In terms of processing, contains 3-hydroxyproline. This modification occurs on the first proline residue in the sequence motif Gly-Pro-Hyp, where Hyp is 4-hydroxyproline. Type IV collagens contain numerous cysteine residues which are involved in inter- and intramolecular disulfide bonding. 12 of these, located in the NC1 domain, are conserved in all known type IV collagens. Post-translationally, the trimeric structure of the NC1 domains is stabilized by covalent bonds (sulfilimine cross-links) between Lys and Met residues. These cross-links are important for the mechanical stability of the basement membrane. Sulfilimine cross-link is catalyzed by PXDN. In terms of processing, proteolytic processing produces the C-terminal NC1 peptide, arresten. As to expression, detected in the basement membrane of the cornea (at protein level).

It localises to the secreted. The protein resides in the extracellular space. It is found in the extracellular matrix. Its subcellular location is the basement membrane. Its function is as follows. Type IV collagen is the major structural component of glomerular basement membranes (GBM), forming a 'chicken-wire' meshwork together with laminins, proteoglycans and entactin/nidogen. In terms of biological role, arresten, comprising the C-terminal NC1 domain, inhibits angiogenesis and tumor formation. The C-terminal half is found to possess the anti-angiogenic activity. Specifically inhibits endothelial cell proliferation, migration and tube formation. This is Collagen alpha-1(IV) chain from Mus musculus (Mouse).